We begin with the raw amino-acid sequence, 274 residues long: Diaminopimelate epimerase (274 aa).

Substrate-binding residues include N11 and N76. Residue C85 is the Proton donor of the active site. Residues 86 to 87 (GN), N157, N189, and 207 to 208 (ER) each bind substrate. The active-site Proton acceptor is C216. Residue 217–218 (GT) participates in substrate binding.

The protein belongs to the diaminopimelate epimerase family. As to quaternary structure, homodimer.

It is found in the cytoplasm. The enzyme catalyses (2S,6S)-2,6-diaminopimelate = meso-2,6-diaminopimelate. It participates in amino-acid biosynthesis; L-lysine biosynthesis via DAP pathway; DL-2,6-diaminopimelate from LL-2,6-diaminopimelate: step 1/1. Catalyzes the stereoinversion of LL-2,6-diaminopimelate (L,L-DAP) to meso-diaminopimelate (meso-DAP), a precursor of L-lysine and an essential component of the bacterial peptidoglycan. In Thermobifida fusca (strain YX), this protein is Diaminopimelate epimerase.